Reading from the N-terminus, the 1439-residue chain is Myomesin-3 (1439 aa).

The segment at Met-1 to Glu-57 is disordered. Residues His-22–His-38 show a composition bias toward basic and acidic residues. Residues Ser-39–Arg-48 show a composition bias toward polar residues. Residues Gln-119–Cys-149 adopt a coiled-coil conformation. 2 consecutive Ig-like C2-type domains span residues Pro-154–Leu-246 and Pro-269–Phe-362. Fibronectin type-III domains are found at residues Ser-376–Tyr-471, Ala-504–Lys-599, Pro-605–Ala-698, Ala-704–Trp-799, and Pro-806–Lys-901. 2 Ig-like C2-type domains span residues Pro-1122 to Thr-1207 and Ala-1336 to Ser-1425.

Homodimer. In terms of tissue distribution, mainly expressed in slow muscle, extraocular muscle and embryonic/neonatal skeletal muscle (at protein level). Expression in skeletal muscle is fiber type specific, with the highest levels in type IIA fibers (intermediate speed) and lower levels in type I fibers.

Its subcellular location is the cytoplasm. It is found in the myofibril. It localises to the sarcomere. The protein resides in the m line. May link the intermediate filament cytoskeleton to the M-disk of the myofibrils in striated muscle. The sequence is that of Myomesin-3 (Myom3) from Mus musculus (Mouse).